Here is an 88-residue protein sequence, read N- to C-terminus: Small ribosomal subunit protein uS15 (88 aa).

Positions 1–20 (MLTTQDKQNIIKENQQSEGD) are enriched in polar residues. Residues 1–24 (MLTTQDKQNIIKENQQSEGDTGSP) are disordered.

This sequence belongs to the universal ribosomal protein uS15 family. In terms of assembly, part of the 30S ribosomal subunit. Forms a bridge to the 50S subunit in the 70S ribosome, contacting the 23S rRNA.

Functionally, one of the primary rRNA binding proteins, it binds directly to 16S rRNA where it helps nucleate assembly of the platform of the 30S subunit by binding and bridging several RNA helices of the 16S rRNA. Forms an intersubunit bridge (bridge B4) with the 23S rRNA of the 50S subunit in the ribosome. The protein is Small ribosomal subunit protein uS15 of Francisella philomiragia subsp. philomiragia (strain ATCC 25017 / CCUG 19701 / FSC 153 / O#319-036).